Consider the following 527-residue polypeptide: Glutamyl-tRNA reductase 1, chloroplastic (527 aa).

A chloroplast-targeting transit peptide spans 1 to 43 (MAGATSATAAAGAFAAAKARGPAAACPWLVAAGGRRRSGVVRC). Substrate-binding positions include 124–127 (TCNR), serine 184, 189–191 (EGQ), and glutamine 195. Cysteine 125 (nucleophile) is an active-site residue. 266–271 (GAGKMG) contributes to the NADP(+) binding site.

The protein belongs to the glutamyl-tRNA reductase family. In terms of assembly, homodimer.

It is found in the plastid. It localises to the chloroplast. It catalyses the reaction (S)-4-amino-5-oxopentanoate + tRNA(Glu) + NADP(+) = L-glutamyl-tRNA(Glu) + NADPH + H(+). It functions in the pathway porphyrin-containing compound metabolism; protoporphyrin-IX biosynthesis; 5-aminolevulinate from L-glutamyl-tRNA(Glu): step 1/2. Catalyzes the NADPH-dependent reduction of glutamyl-tRNA(Glu) to glutamate 1-semialdehyde (GSA). The protein is Glutamyl-tRNA reductase 1, chloroplastic (HEMA1) of Hordeum vulgare (Barley).